The sequence spans 425 residues: Dihydroorotase (425 aa).

Residues His61 and His63 each contribute to the Zn(2+) site. Residues 63–65 (HLR) and Asn95 contribute to the substrate site. The Zn(2+) site is built by Asp153, His180, and His233. Asn279 contributes to the substrate binding site. A Zn(2+)-binding site is contributed by Asp306. Asp306 is a catalytic residue. His310 provides a ligand contact to substrate.

The protein belongs to the metallo-dependent hydrolases superfamily. DHOase family. Class I DHOase subfamily. It depends on Zn(2+) as a cofactor.

The catalysed reaction is (S)-dihydroorotate + H2O = N-carbamoyl-L-aspartate + H(+). It participates in pyrimidine metabolism; UMP biosynthesis via de novo pathway; (S)-dihydroorotate from bicarbonate: step 3/3. In terms of biological role, catalyzes the reversible cyclization of carbamoyl aspartate to dihydroorotate. This is Dihydroorotase from Geobacter sp. (strain M21).